The sequence spans 555 residues: Glutamine--tRNA ligase (555 aa).

A 'HIGH' region motif is present at residues 34–44 (PEPNGYLHIGH). Residues 35–37 (EPN) and 41–47 (HIGHAKS) each bind ATP. Residues D67 and Y212 each contribute to the L-glutamine site. ATP contacts are provided by residues T231, 261–262 (RL), and 269–271 (MSK). The 'KMSKS' region motif lies at 268–272 (VMSKR). Positions 317–324 (TKQDNTIE) are interaction with tRNA.

This sequence belongs to the class-I aminoacyl-tRNA synthetase family. In terms of assembly, monomer.

Its subcellular location is the cytoplasm. The enzyme catalyses tRNA(Gln) + L-glutamine + ATP = L-glutaminyl-tRNA(Gln) + AMP + diphosphate. This Salmonella choleraesuis (strain SC-B67) protein is Glutamine--tRNA ligase.